The primary structure comprises 65 residues: DNA gyrase inhibitor YacG (65 aa).

Zn(2+) contacts are provided by C9, C12, C28, and C32. Positions 44 to 65 are disordered; sequence EKRIPSSSDLSESDDWSEEPKQ. Over residues 54–65 the composition is skewed to acidic residues; the sequence is SESDDWSEEPKQ.

This sequence belongs to the DNA gyrase inhibitor YacG family. As to quaternary structure, interacts with GyrB. Zn(2+) is required as a cofactor.

Inhibits all the catalytic activities of DNA gyrase by preventing its interaction with DNA. Acts by binding directly to the C-terminal domain of GyrB, which probably disrupts DNA binding by the gyrase. This Escherichia coli O6:H1 (strain CFT073 / ATCC 700928 / UPEC) protein is DNA gyrase inhibitor YacG.